Consider the following 338-residue polypeptide: Formimidoylglutamase (338 aa).

Mn(2+)-binding residues include His137, Asp166, His168, Asp170, Cys259, and Asp261.

Belongs to the arginase family. The cofactor is Mn(2+).

The catalysed reaction is N-formimidoyl-L-glutamate + H2O = formamide + L-glutamate. It participates in amino-acid degradation; L-histidine degradation into L-glutamate; L-glutamate from N-formimidoyl-L-glutamate (hydrolase route): step 1/1. Functionally, catalyzes the conversion of N-formimidoyl-L-glutamate to L-glutamate and formamide. This is Formimidoylglutamase from Clostridium tetani (strain Massachusetts / E88).